We begin with the raw amino-acid sequence, 429 residues long: Putative zinc metalloprotease aq_1964 (429 aa).

Zn(2+) is bound at residue His-17. Residue Glu-18 is part of the active site. His-21 contacts Zn(2+). Residues 88 to 110 form a helical membrane-spanning segment; the sequence is ILIALGGPLFNFLFTILVFALVY. The region spanning 189–265 is the PDZ domain; sequence TIKVPNVQKG…AIKLKILRNG (77 aa). The next 2 helical transmembrane spans lie at 369 to 391 and 406 to 428; these read IFNL…IEWL and RVGL…LRLL.

It belongs to the peptidase M50B family. Zn(2+) serves as cofactor.

It localises to the cell inner membrane. The protein is Putative zinc metalloprotease aq_1964 of Aquifex aeolicus (strain VF5).